The following is a 106-amino-acid chain: Cyclin-dependent protein kinase inhibitor SMR15 (106 aa).

Probable cyclin-dependent protein kinase (CDK) inhibitor that functions as a repressor of mitosis in the endoreduplication cell cycle. The protein is Cyclin-dependent protein kinase inhibitor SMR15 of Arabidopsis thaliana (Mouse-ear cress).